We begin with the raw amino-acid sequence, 102 residues long: Small ribosomal subunit protein uS10 (102 aa).

The protein belongs to the universal ribosomal protein uS10 family. As to quaternary structure, part of the 30S ribosomal subunit.

Its function is as follows. Involved in the binding of tRNA to the ribosomes. The protein is Small ribosomal subunit protein uS10 of Streptococcus pneumoniae (strain CGSP14).